Reading from the N-terminus, the 305-residue chain is Testis-expressed protein 52 (305 aa).

The tract at residues 284–305 is disordered; it reads HLSKAQASKSPARKRKRRPGHF. Residues 294 to 305 are compositionally biased toward basic residues; the sequence is PARKRKRRPGHF.

As to expression, expressed in Testis.

This is Testis-expressed protein 52 from Homo sapiens (Human).